The sequence spans 545 residues: High-affinity glucose transporter 1 (545 aa).

The next 9 helical transmembrane spans lie at 29–49, 72–92, 100–120, 125–145, 157–177, 192–212, 291–311, 317–337, and 345–365; these read VFFI…DISS, GFIT…SSFV, LSLL…SSVQ, LIIG…VAPV, GLIG…MFYL, IAWG…FFIP, LTGM…AGYS, VASS…LYFI, and LLIG…GILG. Asparagine 376 and asparagine 387 each carry an N-linked (GlcNAc...) asparagine glycan. 2 helical membrane passes run 395 to 415 and 433 to 453; these read IACC…GIWV and ISTS…PTGF. N-linked (GlcNAc...) asparagine glycosylation is present at asparagine 455. A helical transmembrane segment spans residues 460 to 480; it reads TYIIYGVFCFAMATHVYFGFP. Residues 524-545 form a disordered region; the sequence is VEHEEDKLMNEDSNSESRENQA.

This sequence belongs to the major facilitator superfamily. Sugar transporter (TC 2.A.1.1) family. As to quaternary structure, interacts with the human complement factors FH and C4BP. Also binds human immunodeficiency virus (HIV) protein gp160.

The protein localises to the cell membrane. In terms of biological role, high-affinity glucose transporter. Acts as a multifunctional complement-evasion molecule that causes down-regulation of complement activation by acquisition of human complement factors FH and C4BP. Also functions as a human immunodeficiency virus (HIV) receptor via binding the viral gp160 protein. Modulates hyphae formation. In Candida albicans (strain SC5314 / ATCC MYA-2876) (Yeast), this protein is High-affinity glucose transporter 1.